The primary structure comprises 498 residues: Glycylpeptide N-tetradecanoyltransferase 2 (498 aa).

Positions 1–88 (MAEDSESAAS…QPSKNPSVPM (88 aa)) are disordered. The span at 15–32 (ELDDQDTCGIDGDNEEET) shows a compositional bias: acidic residues. The residue at position 38 (Ser-38) is a Phosphoserine. Positions 45-57 (AKKKKKKQKRKKE) are enriched in basic residues. The segment covering 61-86 (SGGTKSDSASDSQEIKIQQPSKNPSV) has biased composition (polar residues). Tetradecanoyl-CoA-binding residues include His-117, Trp-122, Leu-250, Val-252, Ser-258, Arg-260, Val-261, and Ala-262.

Belongs to the NMT family.

The protein localises to the cytoplasm. It is found in the membrane. The catalysed reaction is N-terminal glycyl-[protein] + tetradecanoyl-CoA = N-tetradecanoylglycyl-[protein] + CoA + H(+). The enzyme catalyses N-terminal glycyl-L-lysyl-[protein] + tetradecanoyl-CoA = N-terminal glycyl-(N(6)-tetradecanoyl)-L-lysyl-[protein] + CoA + H(+). Adds a myristoyl group to the N-terminal glycine residue of certain cellular and viral proteins. Also able to mediate N-terminal lysine myristoylation of proteins: catalyzes myristoylation of ARF6 on both 'Gly-2' and 'Lys-3'. Lysine myristoylation is required to maintain ARF6 on membranes during the GTPase cycle. This is Glycylpeptide N-tetradecanoyltransferase 2 from Homo sapiens (Human).